Consider the following 169-residue polypeptide: MPLLDSFTVDHTRMNAPAVRIAKSMVTPKGDTITVFDLRFCVPNKEILSERGIHTLEHLFAGFMREHLNGDSVEIIDISPMGCRTGFYMSLIGAPTESIVADSWLAAMQDVLKVAVQSDIPELNEYQCGTFEMHSLEQAQEIARNIIASGINVNRNDDLSLSEEILKGL.

Residues His-54, His-58, and Cys-128 each coordinate Fe cation.

Belongs to the LuxS family. Homodimer. Fe cation serves as cofactor.

The catalysed reaction is S-(5-deoxy-D-ribos-5-yl)-L-homocysteine = (S)-4,5-dihydroxypentane-2,3-dione + L-homocysteine. In terms of biological role, involved in the synthesis of autoinducer 2 (AI-2) which is secreted by bacteria and is used to communicate both the cell density and the metabolic potential of the environment. The regulation of gene expression in response to changes in cell density is called quorum sensing. Catalyzes the transformation of S-ribosylhomocysteine (RHC) to homocysteine (HC) and 4,5-dihydroxy-2,3-pentadione (DPD). This is S-ribosylhomocysteine lyase from Shewanella halifaxensis (strain HAW-EB4).